The primary structure comprises 928 residues: Chitin synthase 2 (928 aa).

2 disordered regions span residues 1-45 and 110-179; these read MAYN…EAYA and AYYT…SPAP. Residues 17-28 are compositionally biased toward polar residues; that stretch reads PSAQPQYDSRSP. Residues 130–140 show a composition bias toward basic and acidic residues; the sequence is PSHDEPYRPDT. 9 helical membrane-spanning segments follow: residues 472 to 492, 570 to 589, 613 to 633, 644 to 664, 678 to 698, 723 to 743, 753 to 773, 854 to 874, and 893 to 913; these read SAFGFISVLPGAFCAYRYVAL, WLNGSFFAAVYAVAHVYQLW, LFAWFAIGNFFLVFRLLTASL, TVLGVVFEFVYLGTLLYCFIL, MMMVIFWSVLMVWLTFASIFL, FFGLIVSLASTYVLWFVASFL, CFLQYIVLTPTYINVLNIYAF, VTAWMITNFILVAAVLNIAGF, and VILWSVAGLSLFRFTGACWFL.

This sequence belongs to the chitin synthase family. Class I subfamily.

It is found in the cell membrane. The catalysed reaction is [(1-&gt;4)-N-acetyl-beta-D-glucosaminyl](n) + UDP-N-acetyl-alpha-D-glucosamine = [(1-&gt;4)-N-acetyl-beta-D-glucosaminyl](n+1) + UDP + H(+). In terms of biological role, polymerizes chitin, a structural polymer of the cell wall and septum, by transferring the sugar moiety of UDP-GlcNAc to the non-reducing end of the growing chitin polymer. CHS2 plays a synergistic role to CHS1 in normal yeast cell reproductive growth, even if this role is less predominant than for CHS1. With CHS3, plays an important role in virulence. The chain is Chitin synthase 2 from Exophiala dermatitidis (Black yeast-like fungus).